We begin with the raw amino-acid sequence, 213 residues long: Uridine kinase (213 aa).

15-22 (GASASGKS) lines the ATP pocket.

The protein belongs to the uridine kinase family.

The protein resides in the cytoplasm. The enzyme catalyses uridine + ATP = UMP + ADP + H(+). The catalysed reaction is cytidine + ATP = CMP + ADP + H(+). The protein operates within pyrimidine metabolism; CTP biosynthesis via salvage pathway; CTP from cytidine: step 1/3. It participates in pyrimidine metabolism; UMP biosynthesis via salvage pathway; UMP from uridine: step 1/1. The protein is Uridine kinase of Salmonella agona (strain SL483).